Here is a 435-residue protein sequence, read N- to C-terminus: Protein GOLM2 (435 aa).

Residue Met-1 is modified to N-acetylmethionine. At 1–14 the chain is on the cytoplasmic side; sequence MVGFGANRRAGRLP. A helical; Signal-anchor for type II membrane protein membrane pass occupies residues 15 to 35; sequence SFVLVVLLVVIVVLAFNYWSI. Residues 35-194 adopt a coiled-coil conformation; that stretch reads ISSRHVLLQE…DQFLQEQKET (160 aa). The Lumenal portion of the chain corresponds to 36-435; it reads SSRHVLLQEE…YGKQRFSDVL (400 aa). Basic and acidic residues-rich tracts occupy residues 191–212 and 223–239; these read QKET…DHGA and DANK…PHGK. Disordered regions lie at residues 191-239 and 271-435; these read QKET…PHGK and PPVL…SDVL. A Phosphoserine modification is found at Ser-232. 2 stretches are compositionally biased toward polar residues: residues 282 to 294 and 302 to 320; these read QTIS…QPLS and HLNQ…SNPL. The span at 343-361 shows a compositional bias: basic and acidic residues; sequence ATRDRANDFHKLKQSRFFD. A Phosphoserine modification is found at Ser-365. Acidic residues predominate over residues 398–417; sequence YNEEEDGDGGEEDVQDDEER. Over residues 425-435 the composition is skewed to basic and acidic residues; it reads DYGKQRFSDVL.

Belongs to the GOLM family.

The protein resides in the membrane. The polypeptide is Protein GOLM2 (Mus musculus (Mouse)).